The sequence spans 318 residues: Putative HTH-type transcriptional regulatory protein TK0539 (318 aa).

One can recognise an HTH cro/C1-type domain in the interval leucine 131–leucine 189. A DNA-binding region (H-T-H motif) is located at residues valine 142–arginine 161.

The protein is Putative HTH-type transcriptional regulatory protein TK0539 of Thermococcus kodakarensis (strain ATCC BAA-918 / JCM 12380 / KOD1) (Pyrococcus kodakaraensis (strain KOD1)).